The chain runs to 93 residues: Protein YzgL (93 aa).

The sequence is that of Protein YzgL (yzgL) from Escherichia coli (strain K12).